Reading from the N-terminus, the 256-residue chain is Dihydroorotate dehydrogenase B (NAD(+)), electron transfer subunit (256 aa).

Residues 2–100 (IRLETMKVVA…MGPQGNGFDL (99 aa)) enclose the FAD-binding FR-type domain. FAD-binding positions include 51–54 (RPIS), 68–70 (IYR), and 75–76 (GT). Cys220, Cys225, Cys228, and Cys243 together coordinate [2Fe-2S] cluster.

Belongs to the PyrK family. Heterotetramer of 2 PyrK and 2 PyrD type B subunits. [2Fe-2S] cluster serves as cofactor. The cofactor is FAD.

It functions in the pathway pyrimidine metabolism; UMP biosynthesis via de novo pathway; orotate from (S)-dihydroorotate (NAD(+) route): step 1/1. In terms of biological role, responsible for channeling the electrons from the oxidation of dihydroorotate from the FMN redox center in the PyrD type B subunit to the ultimate electron acceptor NAD(+). This Streptococcus pneumoniae (strain ATCC BAA-255 / R6) protein is Dihydroorotate dehydrogenase B (NAD(+)), electron transfer subunit.